The sequence spans 455 residues: Exodeoxyribonuclease 7 large subunit (455 aa).

It belongs to the XseA family. In terms of assembly, heterooligomer composed of large and small subunits.

It is found in the cytoplasm. The enzyme catalyses Exonucleolytic cleavage in either 5'- to 3'- or 3'- to 5'-direction to yield nucleoside 5'-phosphates.. Functionally, bidirectionally degrades single-stranded DNA into large acid-insoluble oligonucleotides, which are then degraded further into small acid-soluble oligonucleotides. This chain is Exodeoxyribonuclease 7 large subunit, found in Lactobacillus acidophilus (strain ATCC 700396 / NCK56 / N2 / NCFM).